A 920-amino-acid chain; its full sequence is Coatomer subunit beta'-1 (920 aa).

WD repeat units follow at residues 13–52, 55–94, 97–136, 140–180, 183–224, 227–266, 350–392, and 460–500; these read QRSE…MVKS, VTEL…KIKV, AHAD…LCTQ, GHSH…PNFT, AHLK…CVQT, GHTH…LENT, TCDL…GSAL, and RIDV…SYFD. Positions 850 to 920 are disordered; sequence LEQGDVLDEV…EQWVLTPPQE (71 aa). Over residues 854 to 875 the composition is skewed to acidic residues; that stretch reads DVLDEVGEEGEDGEEEEEEDRQ.

It belongs to the WD repeat COPB2 family. In terms of assembly, oligomeric complex that consists of at least the alpha, beta, beta', gamma, delta, epsilon and zeta subunits.

The protein localises to the cytoplasm. It is found in the golgi apparatus membrane. It localises to the cytoplasmic vesicle. The protein resides in the COPI-coated vesicle membrane. Its function is as follows. The coatomer is a cytosolic protein complex that binds to dilysine motifs and reversibly associates with Golgi non-clathrin-coated vesicles, which further mediate biosynthetic protein transport from the ER, via the Golgi up to the trans Golgi network. Coatomer complex is required for budding from Golgi membranes, and is essential for the retrograde Golgi-to-ER transport of dilysine-tagged proteins. This is Coatomer subunit beta'-1 from Arabidopsis thaliana (Mouse-ear cress).